A 461-amino-acid chain; its full sequence is UDP-glucosyltransferase 1 (461 aa).

It belongs to the UDP-glycosyltransferase family.

It participates in secondary metabolite biosynthesis. Its function is as follows. UDP-glucosyltransferase; part of the pathway that mediates the biosynthesis of tenellin-type 2-pyridones, iron-chelating compounds involved in iron stress tolerance, competition with the natural competitor fungus Metarhizium robertsii and insect hosts infection. Targets the N-OH hydroxyl residue of 15-hydroxytellenin (15-HT) to produce pyridovericin-N-O-(beta-D-glucopyranoside) which is further methylated by the methyltransferase MT1 to yield pyridovericin-N-O-(4-O-methyl-beta-D-glucopyranoside) (PMGP). The pathway begins with the assembly of the polyketide-amino acid backbone by the hybrid PKS-NRPS tenS with the help of the enoyl reductase tenC. These enzymes catalyze the synthesis of the pyrrolidine-2-dione intermediates pretellinin A, 11-hydropretellenin A, 12-hydropretellenin A, 13-hydropretellenin A, 14-hydropretellenin A, 12-oxopretellenin A and prototellinin D. The cytochrome P450 monooxygenase tenA then catalyzes an oxidative ring expansion of pretenellin A and 14-hydropretellenin A to form the 2-pyridone core, leading to pretenellin B and pyridovericin, respectively. The cytochrome P450 monooxygenase tenB is then required for the selective N-hydroxylation of the 2-pyridone nitrogen of yield tellinin and 15-hydroxytellenin (15-HT), respectively. The UDP-glucosyltransferase GT1 and the methyltransferase MT1, located outside the tenS gene cluster, contribute to the stepwise glycosylation and methylation of 15-HT to obtain the glycoside pyridovericin-N-O-(4-O-methyl-beta-D-glucopyranoside) (PMGP). Additional related compounds such as 1-O-methyl-15-HT, (8Z)-1-O-methyl-15-HT, and O-methyltenellin A are also produced but the enzymes involved in their biosynthesis have still to be determined. The sequence is that of UDP-glucosyltransferase 1 from Beauveria bassiana (strain ARSEF 2860) (White muscardine disease fungus).